Here is a 225-residue protein sequence, read N- to C-terminus: U2 small nuclear ribonucleoprotein B'' (225 aa).

The region spanning 7 to 86 (HTIYINNMND…KPMRIQYAKT (80 aa)) is the RRM 1 domain. The tract at residues 100–144 (DKEKKKEKKKAKTMEQAAAAANKKPGQGTPNAANTQGTAAPNPQV) is disordered. N6-acetyllysine; alternate is present on Lys111. A Glycyl lysine isopeptide (Lys-Gly) (interchain with G-Cter in SUMO2); alternate cross-link involves residue Lys111. Residues 113-123 (MEQAAAAANKK) are compositionally biased toward low complexity. A compositionally biased stretch (polar residues) spans 127-140 (GTPNAANTQGTAAP). Phosphotyrosine is present on Tyr151. The region spanning 151-225 (YILFLNNLPE…HAMKITYAKK (75 aa)) is the RRM 2 domain.

This sequence belongs to the RRM U1 A/B'' family. As to quaternary structure, identified in the spliceosome B complex. Identified in the spliceosome C complex. Present in a spliceosome complex assembled in vitro, and composed of SNRPB2, HPRP8BP and CRNKL1. Contributes to the binding of stem loop IV of U2 snRNA with SNRPP1.

It is found in the nucleus. Involved in pre-mRNA splicing as component of the spliceosome. Associated with sn-RNP U2, where it contributes to the binding of stem loop IV of U2 snRNA. In Mus musculus (Mouse), this protein is U2 small nuclear ribonucleoprotein B'' (Snrpb2).